The chain runs to 182 residues: ADP-ribosylation factor 3 (182 aa).

G2 carries N-myristoyl glycine lipidation. GTP is bound by residues 24-31 (GLDNAGKT), 67-71 (DLGGQ), and 126-129 (NKQD).

It belongs to the small GTPase superfamily. Arf family. Interacts with GRIP; but preferentially when bound to GTP.

It is found in the golgi apparatus. GTP-binding protein involved in protein trafficking; may modulate vesicle budding and uncoating within the Golgi apparatus. In Arabidopsis thaliana (Mouse-ear cress), this protein is ADP-ribosylation factor 3 (ARF3).